A 298-amino-acid chain; its full sequence is Junctional adhesion molecule B (298 aa).

Positions 1–28 are cleaved as a signal peptide; it reads MARSPQGLLMLLLLHYLIVALDYHKANG. The Extracellular segment spans residues 29 to 236; it reads FSASKDHRQE…GKRMQVDVLN (208 aa). One can recognise an Ig-like V-type domain in the interval 32-128; it reads SKDHRQEVTV…GQNLQEDKVM (97 aa). 2 disulfides stabilise this stretch: Cys51-Cys110 and Cys156-Cys214. N-linked (GlcNAc...) asparagine glycosylation occurs at Asn99. Residues 135–238 form the Ig-like C2-type domain; sequence PAVPACEVPT…RMQVDVLNIS (104 aa). Residues 237–257 form a helical membrane-spanning segment; it reads ISGIIATVVVVAFVISVCGLG. Over 258-298 the chain is Cytoplasmic; that stretch reads TCYAQRKGYFSKETSFQKGSPASKVTTMSENDFKHTKSFII.

It belongs to the immunoglobulin superfamily. Post-translationally, the expression in Sertoli cells is regulated by TGFB3 through ubiquitin-mediated proteasomal degradation. As to expression, expressed by bone marrow stromal cells (at protein level). Expressed in skin (at protein level). Expressed in testis by Sertoli cells (at protein level). Expressed by dorsal root ganglion and spinal cord neurons.

The protein resides in the cell membrane. It is found in the cell junction. It localises to the tight junction. Its function is as follows. Junctional adhesion protein that mediates heterotypic cell-cell interactions with its cognate receptor JAM3 to regulate different cellular processes. Plays a role in homing and mobilization of hematopoietic stem and progenitor cells within the bone marrow. At the surface of bone marrow stromal cells, it contributes to the retention of the hematopoietic stem and progenitor cells expressing JAM3. Plays a central role in leukocytes extravasation by facilitating not only transmigration but also tethering and rolling of leukocytes along the endothelium. Tethering and rolling of leukocytes are dependent on the binding by JAM2 of the integrin alpha-4/beta-1. Plays a role in spermatogenesis where JAM2 and JAM3, which are respectively expressed by Sertoli and germ cells, mediate an interaction between both cell types and play an essential role in the anchorage of germ cells onto Sertoli cells and the assembly of cell polarity complexes during spermatid differentiation. Also functions as an inhibitory somatodendritic cue that prevents the myelination of non-axonal parts of neurons. During myogenesis, it is involved in myocyte fusion. May also play a role in angiogenesis. This chain is Junctional adhesion molecule B, found in Mus musculus (Mouse).